Here is a 513-residue protein sequence, read N- to C-terminus: Histidine ammonia-lyase (513 aa).

Positions 144–146 (ASG) form a cross-link, 5-imidazolinone (Ala-Gly). S145 is subject to 2,3-didehydroalanine (Ser).

Belongs to the PAL/histidase family. Contains an active site 4-methylidene-imidazol-5-one (MIO), which is formed autocatalytically by cyclization and dehydration of residues Ala-Ser-Gly.

It localises to the cytoplasm. It carries out the reaction L-histidine = trans-urocanate + NH4(+). It participates in amino-acid degradation; L-histidine degradation into L-glutamate; N-formimidoyl-L-glutamate from L-histidine: step 1/3. The chain is Histidine ammonia-lyase from Streptococcus gordonii (strain Challis / ATCC 35105 / BCRC 15272 / CH1 / DL1 / V288).